Reading from the N-terminus, the 555-residue chain is CTP synthase (555 aa).

An amidoligase domain region spans residues 1–265 (MTRYIFITGG…GNRVCEKLNI (265 aa)). Serine 13 is a binding site for CTP. Serine 13 is a UTP binding site. ATP contacts are provided by residues 14–19 (SLGKGI) and aspartate 71. The Mg(2+) site is built by aspartate 71 and glutamate 139. CTP is bound by residues 146-148 (DIE), 186-191 (KTKPTQ), and lysine 222. Residues 186–191 (KTKPTQ) and lysine 222 each bind UTP. Residues 290–541 (TVAVVGKYVD…IKAGLAAKEA (252 aa)) enclose the Glutamine amidotransferase type-1 domain. Residue glycine 351 coordinates L-glutamine. The active-site Nucleophile; for glutamine hydrolysis is cysteine 378. L-glutamine-binding positions include 379-382 (LGMQ), glutamate 402, and arginine 469. Catalysis depends on residues histidine 514 and glutamate 516.

It belongs to the CTP synthase family. In terms of assembly, homotetramer.

It catalyses the reaction UTP + L-glutamine + ATP + H2O = CTP + L-glutamate + ADP + phosphate + 2 H(+). The enzyme catalyses L-glutamine + H2O = L-glutamate + NH4(+). The catalysed reaction is UTP + NH4(+) + ATP = CTP + ADP + phosphate + 2 H(+). It participates in pyrimidine metabolism; CTP biosynthesis via de novo pathway; CTP from UDP: step 2/2. Its activity is regulated as follows. Allosterically activated by GTP, when glutamine is the substrate; GTP has no effect on the reaction when ammonia is the substrate. The allosteric effector GTP functions by stabilizing the protein conformation that binds the tetrahedral intermediate(s) formed during glutamine hydrolysis. Inhibited by the product CTP, via allosteric rather than competitive inhibition. Functionally, catalyzes the ATP-dependent amination of UTP to CTP with either L-glutamine or ammonia as the source of nitrogen. Regulates intracellular CTP levels through interactions with the four ribonucleotide triphosphates. The protein is CTP synthase of Coxiella burnetii (strain CbuG_Q212) (Coxiella burnetii (strain Q212)).